The following is a 538-amino-acid chain: MEMELDDQGRMVVRPLLTDLYQATMGLGYWRAGRACEEAEFELFFRHCPFGGSFALTAGLQDCIRFLRAFRLRDADVQFLASVLPPDTDPAFFEHLRALDCSRVSVRALPEGSLAFPGVPLLQVSGPLLLVQLLETPLLCLVSYASLVATNAARLRLIAGPDKRLLEMGLRRAQGPDGGFTASIYSYLGGFDSSSNTLAGQLRGVPVAGTLAHSFITSFLGSEVPPDPMLAPASSEGPAVDLPASVNLWLKHVCIYLGLEEREPHLGERAAFVAYALAFPRAFQGLLDSYSVRRSGLPNFLAVALALGELGYRAVGVRLDSGDLLQQAKEIRGIFRTVGAEFQMPWLEFVPIAVSNNIDEKELARLAQKGSEVNVIGIGTNVVTCPKQPSMGCVYKLVSVGGQPRIKLTEESQKETLPGSKAAFRFLVSEGSLLLDLLQLAEEPPPKAGQELRVWLQGAQEPCTVKPAQVEPLLRLYLQQGQPYEPLPSLEESRAFAQQSLSRLRPAHKQLQNPAVYQVALSEKLRALVDSLSARGAL.

Residues Tyr21 and Thr210 each contribute to the nicotinate site. Residue His213 is modified to Phosphohistidine. A nicotinate-binding site is contributed by Arg318. Thr380 is a binding site for 5-phospho-alpha-D-ribose 1-diphosphate.

It belongs to the NAPRTase family. As to quaternary structure, homodimer. Requires Mg(2+) as cofactor. Mn(2+) serves as cofactor. Post-translationally, transiently phosphorylated on a His residue during the reaction cycle. Phosphorylation strongly increases the affinity for substrates and increases the rate of nicotinate D-ribonucleotide production. Dephosphorylation regenerates the low-affinity form of the enzyme, leading to product release.

The protein localises to the cytoplasm. The protein resides in the cytosol. It carries out the reaction nicotinate + 5-phospho-alpha-D-ribose 1-diphosphate + ATP + H2O = nicotinate beta-D-ribonucleotide + ADP + phosphate + diphosphate. It functions in the pathway cofactor biosynthesis; NAD(+) biosynthesis; nicotinate D-ribonucleotide from nicotinate: step 1/1. Its function is as follows. Catalyzes the first step in the biosynthesis of NAD from nicotinic acid, the ATP-dependent synthesis of beta-nicotinate D-ribonucleotide from nicotinate and 5-phospho-D-ribose 1-phosphate. Helps prevent cellular oxidative stress via its role in NAD biosynthesis. This Rattus norvegicus (Rat) protein is Nicotinate phosphoribosyltransferase (Naprt).